Consider the following 133-residue polypeptide: MGLENLKPAKGSVKKIKRVGRGQGSGMGKTATRGGKGQTARTGYKAKRGFEGGQQPLQRRLPKIGFRTKDSHIYSINVEKNEAIKNLEEITFSSLRALHHFPLYIEGVKLIGKDAKNLASKIKDERIKTSGQK.

The segment at 1–64 (MGLENLKPAK…QPLQRRLPKI (64 aa)) is disordered.

The protein belongs to the universal ribosomal protein uL15 family. Part of the 50S ribosomal subunit.

In terms of biological role, binds to the 23S rRNA. The chain is Large ribosomal subunit protein uL15 from Helicobacter pylori (strain G27).